The following is a 492-amino-acid chain: 2-succinylbenzoate--CoA ligase (492 aa).

This sequence belongs to the ATP-dependent AMP-binding enzyme family. MenE subfamily.

The catalysed reaction is 2-succinylbenzoate + ATP + CoA = 2-succinylbenzoyl-CoA + AMP + diphosphate. The protein operates within quinol/quinone metabolism; 1,4-dihydroxy-2-naphthoate biosynthesis; 1,4-dihydroxy-2-naphthoate from chorismate: step 5/7. Its pathway is quinol/quinone metabolism; menaquinone biosynthesis. In terms of biological role, converts 2-succinylbenzoate (OSB) to 2-succinylbenzoyl-CoA (OSB-CoA). This is 2-succinylbenzoate--CoA ligase from Staphylococcus aureus (strain MSSA476).